The sequence spans 597 residues: MEAEPPLYPMAGAAGPQGDEDLLGVPDGPEAPLDELVGAYPNYNEEEEERRYYRRKRLGVLKNVLAASAGGMLTYGVYLGLLQMQLILHYDETYREVKYGNMGLPDIDSKMLMGINVTPIAALLYTPVLIRFFGTKWMMFLAVGIYALFVSTNYWERYYTLVPSAVALGMAIVPLWASMGNYITRMAQKYHEYSHYKEQDGQGMKQRPPRGSHAPYLLVFQAIFYSFFHLSFACAQLPMIYFLNHYLYDLNHTLYNVQSCGTNSHGILSGFNKTVLRTLPRSGNLIVVESVLMAVAFLAMLLVLGLCGAAYRPTEEIDLRSVGWGNIFQLPFKHVRDYRLRHLVPFFIYSGFEVLFACTGIALGYGVCSVGLERLAYLLVAYSLGASAASLLGLLGLWLPRPVPLVAGAGVHLLLTFILFFWAPVPRVLQHSWILYVAAALWGVGSALNKTGLSTLLGILYEDKERQDFIFTIYHWWQAVAIFTVYLGSSLHMKAKLAVLLVTLVAAAVSYLRMEQKLRRGVAPRQPRIPRPQHKVRGYRYLEEDNSDESDAEGEHGDGAEEEAPPAGPRPGPEPAGLGRRPCPYEQAQGGDGPEEQ.

Residues 1–29 are disordered; it reads MEAEPPLYPMAGAAGPQGDEDLLGVPDGP. 5 consecutive transmembrane segments (helical) span residues 64 to 84, 110 to 130, 132 to 152, 160 to 180, and 223 to 243; these read VLAA…LLQM, KMLM…PVLI, FFGT…FVST, TLVP…ASMG, and IFYS…IYFL. 2 N-linked (GlcNAc...) asparagine glycosylation sites follow: asparagine 251 and asparagine 272. 5 helical membrane passes run 285–305, 343–363, 378–398, 403–423, and 428–448; these read LIVV…LVLG, LVPF…GIAL, LLVA…LGLW, VPLV…FFWA, and VLQH…GSAL. A glycan (N-linked (GlcNAc...) asparagine) is linked at asparagine 449. A run of 2 helical transmembrane segments spans residues 469–489 and 491–511; these read FIFT…YLGS and LHMK…AVSY. Residues 522–597 are disordered; sequence VAPRQPRIPR…AQGGDGPEEQ (76 aa). Phosphoserine is present on residues serine 547 and serine 550.

Belongs to the unc-93 family. As to quaternary structure, interacts with TLR3, TLR5, TLR7, and TLR9 (probably via transmembrane domain). Post-translationally, N-glycosylated. As to expression, expressed in plasmocytoid dendritic cells (at protein level). Highly expressed in antigen-presenting cells. Expressed in heart, and at lower level in kidney. Expressed at low level in other tissues.

It is found in the endoplasmic reticulum membrane. The protein localises to the endosome. Its subcellular location is the lysosome. The protein resides in the cytoplasmic vesicle. It localises to the phagosome. Plays an important role in innate and adaptive immunity by regulating nucleotide-sensing Toll-like receptor (TLR) signaling. Required for the transport of a subset of TLRs (including TLR3, TLR7 and TLR9) from the endoplasmic reticulum to endolysosomes where they can engage pathogen nucleotides and activate signaling cascades. May play a role in autoreactive B-cells removal. The chain is Protein unc-93 homolog B1 from Homo sapiens (Human).